Here is a 268-residue protein sequence, read N- to C-terminus: Phosphatidylglycerol--prolipoprotein diacylglyceryl transferase (268 aa).

The next 4 helical transmembrane spans lie at 23 to 43 (WYAL…LALA), 58 to 78 (FLTW…VLFY), 96 to 116 (GGMS…LFCW), and 119 to 139 (GLSP…GLFF). Residue Arg141 coordinates a 1,2-diacyl-sn-glycero-3-phospho-(1'-sn-glycerol). 3 helical membrane-spanning segments follow: residues 181 to 201 (SFLE…MPAV), 206 to 226 (GMTA…AEFF), and 238 to 258 (AGAT…VWLV).

Belongs to the Lgt family.

It is found in the cell inner membrane. The enzyme catalyses L-cysteinyl-[prolipoprotein] + a 1,2-diacyl-sn-glycero-3-phospho-(1'-sn-glycerol) = an S-1,2-diacyl-sn-glyceryl-L-cysteinyl-[prolipoprotein] + sn-glycerol 1-phosphate + H(+). The protein operates within protein modification; lipoprotein biosynthesis (diacylglyceryl transfer). Its function is as follows. Catalyzes the transfer of the diacylglyceryl group from phosphatidylglycerol to the sulfhydryl group of the N-terminal cysteine of a prolipoprotein, the first step in the formation of mature lipoproteins. The polypeptide is Phosphatidylglycerol--prolipoprotein diacylglyceryl transferase (Azospirillum brasilense).